The sequence spans 478 residues: 3-isopropylmalate dehydratase large subunit (478 aa).

[4Fe-4S] cluster contacts are provided by C359, C417, and C420.

This sequence belongs to the aconitase/IPM isomerase family. LeuC type 1 subfamily. As to quaternary structure, heterodimer of LeuC and LeuD. Requires [4Fe-4S] cluster as cofactor.

It catalyses the reaction (2R,3S)-3-isopropylmalate = (2S)-2-isopropylmalate. It participates in amino-acid biosynthesis; L-leucine biosynthesis; L-leucine from 3-methyl-2-oxobutanoate: step 2/4. Its function is as follows. Catalyzes the isomerization between 2-isopropylmalate and 3-isopropylmalate, via the formation of 2-isopropylmaleate. This Anaeromyxobacter sp. (strain Fw109-5) protein is 3-isopropylmalate dehydratase large subunit.